The following is a 398-amino-acid chain: 1-deoxy-D-xylulose 5-phosphate reductoisomerase (398 aa).

Thr-10, Gly-11, Ser-12, Ile-13, Lys-37, Asn-38, and Asn-124 together coordinate NADPH. Residue Lys-125 coordinates 1-deoxy-D-xylulose 5-phosphate. NADPH is bound at residue Glu-126. Residue Asp-150 coordinates Mn(2+). Residues Ser-151, Glu-152, Ser-186, and His-209 each coordinate 1-deoxy-D-xylulose 5-phosphate. Residue Glu-152 coordinates Mn(2+). Residue Gly-215 participates in NADPH binding. Positions 222, 227, 228, and 231 each coordinate 1-deoxy-D-xylulose 5-phosphate. Glu-231 contributes to the Mn(2+) binding site.

It belongs to the DXR family. As to quaternary structure, homodimer. It depends on Mg(2+) as a cofactor. Requires Mn(2+) as cofactor.

The enzyme catalyses 2-C-methyl-D-erythritol 4-phosphate + NADP(+) = 1-deoxy-D-xylulose 5-phosphate + NADPH + H(+). It functions in the pathway isoprenoid biosynthesis; isopentenyl diphosphate biosynthesis via DXP pathway; isopentenyl diphosphate from 1-deoxy-D-xylulose 5-phosphate: step 1/6. Its function is as follows. Catalyzes the NADPH-dependent rearrangement and reduction of 1-deoxy-D-xylulose-5-phosphate (DXP) to 2-C-methyl-D-erythritol 4-phosphate (MEP). The polypeptide is 1-deoxy-D-xylulose 5-phosphate reductoisomerase (Buchnera aphidicola subsp. Acyrthosiphon pisum (strain APS) (Acyrthosiphon pisum symbiotic bacterium)).